Here is a 440-residue protein sequence, read N- to C-terminus: Streptokinase A (440 aa).

Residues 1–26 (MKNYLSIGVIALLFALTFGTVKSVQA) form the signal peptide.

In terms of biological role, this protein is not a protease, but it activates plasminogen by complexing with it. As a potential virulence factor, it is thought to prevent the formation of effective fibrin barriers around the site of infection, thereby contributing to the invasiveness of the cells. This chain is Streptokinase A (ska), found in Streptococcus pyogenes serotype M1.